The chain runs to 509 residues: Maturase K (509 aa).

It belongs to the intron maturase 2 family. MatK subfamily.

It localises to the plastid. The protein resides in the chloroplast. In terms of biological role, usually encoded in the trnK tRNA gene intron. Probably assists in splicing its own and other chloroplast group II introns. The protein is Maturase K of Nicotiana glauca (Glaucous tobacco).